The chain runs to 519 residues: NADH-quinone oxidoreductase subunit N (519 aa).

14 consecutive transmembrane segments (helical) span residues 22 to 42 (LLPM…EAFV), 53 to 73 (VLAL…TGLP), 87 to 107 (PTLF…LLIA), 141 to 161 (TEVF…PAAN), 163 to 183 (LITA…LAGM), 198 to 218 (YFLL…LVYG), 242 to 262 (IIVG…GVPF), 287 to 307 (VAAF…LAWD), 310 to 330 (PVIW…GITQ), 336 to 356 (LLAY…AATT), 363 to 383 (VLFY…IVIL), 406 to 426 (LVAG…PTSG), 442 to 461 (AGPL…YYYL), and 483 to 503 (GALA…LGIV).

The protein belongs to the complex I subunit 2 family. In terms of assembly, NDH-1 is composed of 14 different subunits. Subunits NuoA, H, J, K, L, M, N constitute the membrane sector of the complex.

The protein localises to the cell membrane. It catalyses the reaction a quinone + NADH + 5 H(+)(in) = a quinol + NAD(+) + 4 H(+)(out). In terms of biological role, NDH-1 shuttles electrons from NADH, via FMN and iron-sulfur (Fe-S) centers, to quinones in the respiratory chain. The immediate electron acceptor for the enzyme in this species is believed to be a menaquinone. Couples the redox reaction to proton translocation (for every two electrons transferred, four hydrogen ions are translocated across the cytoplasmic membrane), and thus conserves the redox energy in a proton gradient. In Acidothermus cellulolyticus (strain ATCC 43068 / DSM 8971 / 11B), this protein is NADH-quinone oxidoreductase subunit N.